A 240-amino-acid chain; its full sequence is 14-3-3 protein 3 (240 aa).

Belongs to the 14-3-3 family. In terms of assembly, interacts with coactosin. Interacts with ACTO/actophorin.

The protein resides in the cytoplasm. It localises to the cell projection. Its subcellular location is the phagocytic cup. Adapter protein which is required for phagocytosis and motility, probably by regulating actin cytoskeleton dynamics. During phagocytosis, plays a role in the initiation and/or formation of the phagocytic cup and is involved in the recruitment of the actin binding protein coactosin to the phagocytic cup. This Entamoeba histolytica (strain ATCC 30459 / HM-1:IMSS / ABRM) protein is 14-3-3 protein 3.